A 512-amino-acid polypeptide reads, in one-letter code: ATP synthase subunit alpha (512 aa).

Position 169-176 (glycine 169–threonine 176) interacts with ATP.

This sequence belongs to the ATPase alpha/beta chains family. F-type ATPases have 2 components, CF(1) - the catalytic core - and CF(0) - the membrane proton channel. CF(1) has five subunits: alpha(3), beta(3), gamma(1), delta(1), epsilon(1). CF(0) has three main subunits: a(1), b(2) and c(9-12). The alpha and beta chains form an alternating ring which encloses part of the gamma chain. CF(1) is attached to CF(0) by a central stalk formed by the gamma and epsilon chains, while a peripheral stalk is formed by the delta and b chains.

The protein resides in the cell inner membrane. It catalyses the reaction ATP + H2O + 4 H(+)(in) = ADP + phosphate + 5 H(+)(out). Its function is as follows. Produces ATP from ADP in the presence of a proton gradient across the membrane. The alpha chain is a regulatory subunit. The sequence is that of ATP synthase subunit alpha from Ruegeria pomeroyi (strain ATCC 700808 / DSM 15171 / DSS-3) (Silicibacter pomeroyi).